The sequence spans 144 residues: Neuritin-B (144 aa).

An N-terminal signal peptide occupies residues 1-27; that stretch reads MGLKLSGRYIFLVLAVHLAYLLQAVKA. The GPI-anchor amidated serine moiety is linked to residue S114. A propeptide spans 115–144 (removed in mature form); that stretch reads TGAPGPRLLFPAFLPLLIVFLSALLNWVLQ.

This sequence belongs to the neuritin family.

It is found in the cell membrane. Functionally, modulates postsynaptic dendritic arbor elaboration and synaptic maturation. This is Neuritin-B (nrn1-b) from Xenopus laevis (African clawed frog).